The chain runs to 350 residues: Formimidoylglutamase (350 aa).

Mn(2+) is bound by residues H130, D165, H167, D169, D269, and D271.

Belongs to the arginase family. Mn(2+) is required as a cofactor.

It catalyses the reaction N-formimidoyl-L-glutamate + H2O = formamide + L-glutamate. Its pathway is amino-acid degradation; L-histidine degradation into L-glutamate; L-glutamate from N-formimidoyl-L-glutamate (hydrolase route): step 1/1. Catalyzes the conversion of N-formimidoyl-L-glutamate to L-glutamate and formamide. This Aliivibrio fischeri (strain ATCC 700601 / ES114) (Vibrio fischeri) protein is Formimidoylglutamase.